The sequence spans 518 residues: Cytochrome P450 monooxygenase pyr3 (518 aa).

A helical membrane pass occupies residues 26–46 (GVAIVLFLAPLALHLVSSYLF). Heme is bound at residue cysteine 458.

This sequence belongs to the cytochrome P450 family. Heme is required as a cofactor.

The protein localises to the membrane. It participates in secondary metabolite biosynthesis; terpenoid biosynthesis. In terms of biological role, cytochrome P450 monooxygenase; part of the gene cluster that mediates the biosynthesis of pyripyropene A, a specific human acyl-coenzyme A:cholesterol acyltransferase 2 inhibitor. The first step of the pathway is the synthesis of nicotinyl-CoA from nicotinic acid by the nicotinic acid-CoA ligase pyr1. Nicotinyl-CoA is then a substrate of polyketide synthase pyr2 to produce 4-hydroxy-6-(3-pyridinyl)-2H-pyran-2-one (HPPO) which is further prenylated by the polyprenyl transferase pyr6 to yield farnesyl-HPPO. The next steps consist of an epoxidation of farnesyl-HPPO to epoxyfarnesyl-HPPO by FAD-dependent monooxygenase pyr5 and a cyclization of the terpenoid portion by the terpene cyclase pyr4 to yield deacetyl-pyripyropene E. The 2 cytochrome P450 monooxygenases pyr3 and pyr9, and the 2 acetyltransferases pyr7 and pyr8 are involved in the conversion of deacetyl-pyripyropene E into pyripyropene A through several cycles of oxidation and acetylation steps. Pyr7 acetylates deacetyl-pyripyropene E to pyripyropene E which is oxidized to 11-deacetyl-pyripyropene O by pyr3, which is in turn acetylated into pyripyropene O by pyr8. Pyripyropene O is then oxidized to deacetyl-pyripyropene A by pyr9. Deacetyl-pyripyropene A is finally acetylated to pyripyropene A by pyr8. The sequence is that of Cytochrome P450 monooxygenase pyr3 from Aspergillus fumigatus (strain ATCC MYA-4609 / CBS 101355 / FGSC A1100 / Af293) (Neosartorya fumigata).